The following is a 222-amino-acid chain: Glutathione S-transferase alpha-1 (222 aa).

M1 carries the post-translational modification N-acetylmethionine. A GST N-terminal domain is found at 3–83; it reads GKPVLHYFNA…YIATKYDLYG (81 aa). The residue at position 4 (K4) is an N6-succinyllysine. Glutathione is bound by residues Y9, K45, 54–55, and 67–68; these read QV and QT. A GST C-terminal domain is found at 85-208; that stretch reads DMKERALIDM…QPGSQRKLPV (124 aa).

Belongs to the GST superfamily. Alpha family. Homodimer. Homodimer or heterodimer of GSTA1 and GSTA2.

It is found in the cytoplasm. The enzyme catalyses RX + glutathione = an S-substituted glutathione + a halide anion + H(+). The catalysed reaction is prostaglandin A2 + glutathione = prostaglandin A2-S-(R)-glutathione. It carries out the reaction prostaglandin J2 + glutathione = prostaglandin J2-S-(R)-glutathione. It catalyses the reaction (13S)-hydroperoxy-(9Z,11E)-octadecadienoate + 2 glutathione = (13S)-hydroxy-(9Z,11E)-octadecadienoate + glutathione disulfide + H2O. The enzyme catalyses androst-5-ene-3,17-dione = androst-4-ene-3,17-dione. Its function is as follows. Glutathione S-transferase that catalyzes the nucleophilic attack of the sulfur atom of glutathione on the electrophilic groups of a wide range of exogenous and endogenous compounds. Involved in the formation of glutathione conjugates of both prostaglandin A2 (PGA2) and prostaglandin J2 (PGJ2). It also catalyzes the isomerization of D5-androstene-3,17-dione (AD) into D4-androstene-3,17-dione and may therefore play an important role in hormone biosynthesis. Through its glutathione-dependent peroxidase activity toward the fatty acid hydroperoxide (13S)-hydroperoxy-(9Z,11E)-octadecadienoate/13-HPODE it is also involved in the metabolism of oxidized linoleic acid. This Rattus norvegicus (Rat) protein is Glutathione S-transferase alpha-1 (Gsta1).